Consider the following 225-residue polypeptide: Potassium-transporting ATPase KdpC subunit (225 aa).

A helical membrane pass occupies residues 18–38 (ALLVLTVVTGIVYPLVVTGVA). The interval 134-161 (NSVPGHPVRPEDVPADAVTSSGSGLDPD) is disordered.

Belongs to the KdpC family. In terms of assembly, the system is composed of three essential subunits: KdpA, KdpB and KdpC.

The protein localises to the cell membrane. Part of the high-affinity ATP-driven potassium transport (or Kdp) system, which catalyzes the hydrolysis of ATP coupled with the electrogenic transport of potassium into the cytoplasm. This subunit acts as a catalytic chaperone that increases the ATP-binding affinity of the ATP-hydrolyzing subunit KdpB by the formation of a transient KdpB/KdpC/ATP ternary complex. This is Potassium-transporting ATPase KdpC subunit from Streptomyces coelicolor (strain ATCC BAA-471 / A3(2) / M145).